The chain runs to 191 residues: Small ribosomal subunit protein uS7 (191 aa).

Belongs to the universal ribosomal protein uS7 family. Part of the 30S ribosomal subunit.

One of the primary rRNA binding proteins, it binds directly to 16S rRNA where it nucleates assembly of the head domain of the 30S subunit. Is located at the subunit interface close to the decoding center. The sequence is that of Small ribosomal subunit protein uS7 from Methanocaldococcus jannaschii (strain ATCC 43067 / DSM 2661 / JAL-1 / JCM 10045 / NBRC 100440) (Methanococcus jannaschii).